The sequence spans 639 residues: Chaperone protein DnaK (639 aa).

Threonine 197 is modified (phosphothreonine; by autocatalysis). Composition is skewed to basic and acidic residues over residues 514–529 (AEEN…DLVE) and 540–553 (GTEK…EKVD). Disordered regions lie at residues 514–554 (AEEN…KVDP) and 603–639 (DKAE…RKRG). Residues 612 to 633 (APEEEERGVDEDIVDADFEDLD) show a composition bias toward acidic residues.

The protein belongs to the heat shock protein 70 family.

Functionally, acts as a chaperone. This Jannaschia sp. (strain CCS1) protein is Chaperone protein DnaK.